Here is a 391-residue protein sequence, read N- to C-terminus: Nucleosome assembly protein 1-like 1 (391 aa).

A compositionally biased stretch (basic and acidic residues) spans 1-10 (MADIDNKEQS). The segment at 1–32 (MADIDNKEQSELDQDLDDVEEVEEEETGEETK) is disordered. Ala-2 is modified (N-acetylalanine). Ser-10 carries the phosphoserine modification. Over residues 11–28 (ELDQDLDDVEEVEEEETG) the composition is skewed to acidic residues. Phosphothreonine occurs at positions 62 and 64. At Ser-69 the chain carries Phosphoserine. N6-acetyllysine is present on Lys-116. The NAP1L motif motif lies at 125-150 (YEPTEEECEWKPDEEDEISEELKEKA). The span at 132–143 (CEWKPDEEDEIS) shows a compositional bias: acidic residues. Residues 132–163 (CEWKPDEEDEISEELKEKAKIEDEKKDEEKED) form a disordered region. A Phosphoserine modification is found at Ser-143. The segment covering 144 to 163 (EELKEKAKIEDEKKDEEKED) has biased composition (basic and acidic residues). The short motif at 273 to 279 (IKKKQKH) is the Nuclear localization signal element. Residues 346–376 (AIEDDDDDYDEEGEEADEEGEEEGDEENDPD) are compositionally biased toward acidic residues. A disordered region spans residues 346–391 (AIEDDDDDYDEEGEEADEEGEEEGDEENDPDYDPKKDQNPAECKQQ). 2 positions are modified to 5-glutamyl polyglycine: Glu-359 and Glu-360. Basic and acidic residues predominate over residues 377–391 (YDPKKDQNPAECKQQ). Cysteine methyl ester is present on Cys-388. Cys-388 is lipidated: S-farnesyl cysteine. Positions 389-391 (KQQ) are cleaved as a propeptide — removed in mature form.

Belongs to the nucleosome assembly protein (NAP) family. Homodimer. The dimer binds strongly and sequentially to single and double H2A-H2B heterodimers. Interacts with ERCC6; this interaction increases ERCC6 processivity. Interacts with RAD54. Interacts with SETD1A. In terms of processing, polyglycylated by TTLL10 on glutamate residues, resulting in polyglycine chains on the gamma-carboxyl group. Both polyglutamylation and polyglycylation modifications can coexist on the same protein on adjacent residues, and lowering polyglycylation levels increases polyglutamylation, and reciprocally. Post-translationally, polyglutamylated by TTLL4 on glutamate residues, resulting in polyglutamate chains on the gamma-carboxyl group. Both polyglutamylation and polyglycylation modifications can coexist on the same protein on adjacent residues, and lowering polyglycylation levels increases polyglutamylation, and reciprocally.

It is found in the nucleus. The protein resides in the melanosome. Its subcellular location is the cytoplasm. Functionally, histone chaperone that plays a role in the nuclear import of H2A-H2B and nucleosome assembly. Also participates in several important DNA repair mechanisms: greatly enhances ERCC6-mediated chromatin remodeling which is essential for transcription-coupled nucleotide excision DNA repair. Also stimulates homologous recombination (HR) by RAD51 and RAD54 which is essential in mitotic DNA double strand break (DSB) repair. Plays a key role in the regulation of embryonic neurogenesis. Promotes the proliferation of neural progenitors and inhibits neuronal differentiation during cortical development. Regulates neurogenesis via the modulation of RASSF10; regulates RASSF10 expression by promoting SETD1A-mediated H3K4 methylation at the RASSF10 promoter. This Pongo abelii (Sumatran orangutan) protein is Nucleosome assembly protein 1-like 1 (NAP1L1).